The sequence spans 467 residues: DNA methyltransferase 1-associated protein 1 (467 aa).

2 stretches are compositionally biased toward basic and acidic residues: residues 1 to 11 and 26 to 48; these read MATGADVRDIL and SKKD…LTFK. Residues 1–48 form a disordered region; sequence MATGADVRDILELGGPEGDAASGTISKKDIINPDKKKSKKSSETLTFK. Lys-27 is covalently cross-linked (Glycyl lysine isopeptide (Lys-Gly) (interchain with G-Cter in SUMO2)). One can recognise an SANT domain in the interval 149–199; sequence DDAWTKAETDHLFDLSRRFDLRFVVIHDRYDHQQFKKRSVEDLKERYYHIC. Lys-214 is covalently cross-linked (Glycyl lysine isopeptide (Lys-Gly) (interchain with G-Cter in SUMO2)). Positions 225-275 form a coiled coil; that stretch reads RRKEQLERLYNRTPEQVAEEEYLLQELRKIEARKKEREKRSQDLQKLITAA. The segment covering 258–267 has biased composition (basic and acidic residues); that stretch reads KKEREKRSQD. 2 disordered regions span residues 258–305 and 404–467; these read KKER…PAVP and LGGP…AKKP. Over residues 406 to 422 the composition is skewed to low complexity; sequence GPATPASGPGPASAEPA. Residue Thr-445 is modified to Phosphothreonine. Position 448 is a phosphoserine (Ser-448).

As to quaternary structure, component of the NuA4 histone acetyltransferase complex which contains the catalytic subunit KAT5/TIP60 and the subunits EP400, TRRAP/PAF400, BRD8/SMAP, EPC1, DMAP1/DNMAP1, RUVBL1/TIP49, RUVBL2, ING3, actin, ACTL6A/BAF53A, MORF4L1/MRG15, MORF4L2/MRGX, MRGBP, YEATS4/GAS41, VPS72/YL1 and MEAF6. Component of a NuA4-related complex which contains EP400, TRRAP/PAF400, SRCAP, BRD8/SMAP, EPC1, DMAP1/DNMAP1, RUVBL1/TIP49, RUVBL2, actin, ACTL6A/BAF53A, VPS72 and YEATS4/GAS41. DMAP1 also forms a complex with DNMT1 and HDAC2. Throughout S phase it interacts directly with the N-terminus of DNMT1, which serves to recruit DMAP1 to replication foci. DMAP1 interacts with ING1, a component of the mSin3A transcription repressor complex, although this interaction is not required for recruitment of ING1 to heterochromatin. Interacts directly with the transcriptional corepressor TSG101. Interacts with the pro-apoptotic protein DAXX. Interacts with URI1.

The protein localises to the nucleus. The protein resides in the cytoplasm. Its function is as follows. Involved in transcription repression and activation. Its interaction with HDAC2 may provide a mechanism for histone deacetylation in heterochromatin following replication of DNA at late firing origins. Can also repress transcription independently of histone deacetylase activity. May specifically potentiate DAXX-mediated repression of glucocorticoid receptor-dependent transcription. Component of the NuA4 histone acetyltransferase (HAT) complex which is involved in transcriptional activation of select genes principally by acetylation of nucleosomal histones H4 and H2A. This modification may both alter nucleosome - DNA interactions and promote interaction of the modified histones with other proteins which positively regulate transcription. This complex may be required for the activation of transcriptional programs associated with oncogene and proto-oncogene mediated growth induction, tumor suppressor mediated growth arrest and replicative senescence, apoptosis, and DNA repair. NuA4 may also play a direct role in DNA repair when recruited to sites of DNA damage. Participates in the nuclear localization of URI1 and increases its transcriptional corepressor activity. The chain is DNA methyltransferase 1-associated protein 1 (DMAP1) from Homo sapiens (Human).